Consider the following 320-residue polypeptide: Cytochrome f (320 aa).

A signal peptide spans 1–35; sequence MQMRNTFSWIKEEIIRFIAVSLIIYIITRAPISNA. Heme contacts are provided by Tyr36, Cys56, Cys59, and His60. Residues 286-306 form a helical membrane-spanning segment; it reads VQGLLLFLASIILAQIFLVLK.

This sequence belongs to the cytochrome f family. In terms of assembly, the 4 large subunits of the cytochrome b6-f complex are cytochrome b6, subunit IV (17 kDa polypeptide, petD), cytochrome f and the Rieske protein, while the 4 small subunits are PetG, PetL, PetM and PetN. The complex functions as a dimer. Heme is required as a cofactor.

The protein localises to the plastid. Its subcellular location is the chloroplast thylakoid membrane. In terms of biological role, component of the cytochrome b6-f complex, which mediates electron transfer between photosystem II (PSII) and photosystem I (PSI), cyclic electron flow around PSI, and state transitions. This chain is Cytochrome f, found in Morus indica (Mulberry).